The primary structure comprises 177 residues: MGNIFEKLFKSLLGKKKMRILILSLDTAGKTTILYKLKLGETVPAVPTVGFCVETVEYKNNTFAVWDVGSHFKIRPLWQHFFQNTKGARSPGSTHQGSLASGVLPIKCSHVEFGMWKGGRSHPFLPHSSRCAGSGGQLDSILPHQSPAWGPWGCKDLSSGFPSFLTSSILWKSAVVK.

Residue G2 is the site of N-myristoyl glycine attachment. Residues S24–T31, D67–H71, and L125–S128 each bind GTP.

Belongs to the small GTPase superfamily. Arf family.

It localises to the golgi apparatus. Its function is as follows. GTP-binding protein that functions as an allosteric activator of the cholera toxin catalytic subunit, an ADP-ribosyltransferase. Involved in protein trafficking; may modulate vesicle budding and uncoating within the Golgi apparatus. This chain is ADP-ribosylation factor-like protein 17 (ARL17A), found in Homo sapiens (Human).